The primary structure comprises 338 residues: Nicotinate-nucleotide--dimethylbenzimidazole phosphoribosyltransferase (338 aa).

Residue Glu305 is the Proton acceptor of the active site.

This sequence belongs to the CobT family.

The catalysed reaction is 5,6-dimethylbenzimidazole + nicotinate beta-D-ribonucleotide = alpha-ribazole 5'-phosphate + nicotinate + H(+). It functions in the pathway nucleoside biosynthesis; alpha-ribazole biosynthesis; alpha-ribazole from 5,6-dimethylbenzimidazole: step 1/2. Catalyzes the synthesis of alpha-ribazole-5'-phosphate from nicotinate mononucleotide (NAMN) and 5,6-dimethylbenzimidazole (DMB). The protein is Nicotinate-nucleotide--dimethylbenzimidazole phosphoribosyltransferase of Rhizobium johnstonii (strain DSM 114642 / LMG 32736 / 3841) (Rhizobium leguminosarum bv. viciae).